The chain runs to 430 residues: METGRRRTIPEVEILARLPLRSIARFKSVCKRWKSVIESDYFRRLFGSFHRSSSTSWSIMFRTEYLREMTQAIGFHGCKTWDLPKSLVSYIMPFQEYPNLPTSEYYYIASSNGLIWIDVLVSRIKNKVYSYKSFVGNPVLQEWVEIPQPPNPWVQDKHPWYPSPYSGVGMVTRVENGVVSSFKMVRTVQMELIDRRDEGMYLWRVCVYSSETGLWTFKQVFSSRPVHGGRVDSPVNLNGVLYMWDRYMFSNGPGVLVAHDFYGADDQCQVIPLPGANDEHEHEHDDEHEHVRRCLTTSGEDVIFIEVIHRILKAWRLHNKESERWQLIWEVVMPSFISDVNCFPLAMNPFDTYIVYLWDRQHGCLVSGYLQAQEFIVHQESENGSSSEGDCCRVNTSGTEGYMEERCDGVLMLSQFVLPSWMDSVPRPPN.

In terms of domain architecture, F-box spans 1 to 45 (METGRRRTIPEVEILARLPLRSIARFKSVCKRWKSVIESDYFRRL).

The polypeptide is F-box protein At1g49990 (Arabidopsis thaliana (Mouse-ear cress)).